The chain runs to 483 residues: Glycogen synthase kinase-3 alpha (483 aa).

Positions 1–15 (MSGGGPSGGGPGGSG) are enriched in gly residues. A disordered region spans residues 1–96 (MSGGGPSGGG…PPPGVKLGRD (96 aa)). The residue at position 2 (S2) is an N-acetylserine. Residue S2 is modified to Phosphoserine. Phosphoserine; by PKB/AKT1 is present on S21. Positions 25–82 (PGGGGGGGGGGPGGSASGPGGTGGGKASVGAMGGGVGASSSGGGPGGSGGGGSGGPGA) are enriched in gly residues. Phosphoserine occurs at positions 72, 77, and 97. Positions 119–403 (YTDIKVIGNG…PLEACAHSFF (285 aa)) constitute a Protein kinase domain. ATP-binding positions include 125–133 (IGNGSFGVV) and K148. The active-site Proton acceptor is D244. Y279 is subject to Phosphotyrosine. The interval 449-483 (AGTTTLTPSSQALTETPTSSDWQSTDATPTLTNSS) is disordered.

It belongs to the protein kinase superfamily. CMGC Ser/Thr protein kinase family. GSK-3 subfamily. As to quaternary structure, monomer. Interacts with ARRB2. Interacts with AXIN1 and CTNNB1/beta-catenin. Interacts with CTNND2. Interacts with LMBR1L. Interacts with DDX3X. Interacts with TNFRSF10B. Interacts with RICTOR; the interaction results in phosphorylation of RICTOR at 'Thr-1695' by GSK3A which facilitates FBXW7-mediated ubiquitination and subsequent degradation of RICTOR. (Microbial infection) Interacts with M.tuberculosis PtpA. In terms of processing, phosphorylated by AKT1 at Ser-21: upon insulin-mediated signaling, the activated PKB/AKT1 protein kinase phosphorylates and deactivates GSK3A, resulting in the dephosphorylation and activation of GYS1. Activated by phosphorylation at Tyr-279. Post-translationally, (Microbial infection) Dephosphorylated at Tyr-279 by M.tuberculosis PtpA, which leads to prevention of apoptosis during early stages of microbial infection.

It carries out the reaction L-seryl-[tau protein] + ATP = O-phospho-L-seryl-[tau protein] + ADP + H(+). The catalysed reaction is L-threonyl-[tau protein] + ATP = O-phospho-L-threonyl-[tau protein] + ADP + H(+). It catalyses the reaction L-seryl-[protein] + ATP = O-phospho-L-seryl-[protein] + ADP + H(+). The enzyme catalyses L-threonyl-[protein] + ATP = O-phospho-L-threonyl-[protein] + ADP + H(+). Activated by phosphorylation at Tyr-279. In response to insulin, inhibited by phosphorylation at Ser-21 by PKB/AKT1; phosphorylation at this site causes a conformational change, preventing access of substrates to the active site. Inhibited by lithium. Constitutively active protein kinase that acts as a negative regulator in the hormonal control of glucose homeostasis, Wnt signaling and regulation of transcription factors and microtubules, by phosphorylating and inactivating glycogen synthase (GYS1 or GYS2), CTNNB1/beta-catenin, APC and AXIN1. Requires primed phosphorylation of the majority of its substrates. Contributes to insulin regulation of glycogen synthesis by phosphorylating and inhibiting GYS1 activity and hence glycogen synthesis. Regulates glycogen metabolism in liver, but not in muscle. May also mediate the development of insulin resistance by regulating activation of transcription factors. In Wnt signaling, regulates the level and transcriptional activity of nuclear CTNNB1/beta-catenin. Facilitates amyloid precursor protein (APP) processing and the generation of APP-derived amyloid plaques found in Alzheimer disease. May be involved in the regulation of replication in pancreatic beta-cells. Is necessary for the establishment of neuronal polarity and axon outgrowth. Through phosphorylation of the anti-apoptotic protein MCL1, may control cell apoptosis in response to growth factors deprivation. Acts as a regulator of autophagy by mediating phosphorylation of KAT5/TIP60 under starvation conditions which activates KAT5/TIP60 acetyltransferase activity and promotes acetylation of key autophagy regulators, such as ULK1 and RUBCNL/Pacer. Negatively regulates extrinsic apoptotic signaling pathway via death domain receptors. Promotes the formation of an anti-apoptotic complex, made of DDX3X, BRIC2 and GSK3B, at death receptors, including TNFRSF10B. The anti-apoptotic function is most effective with weak apoptotic signals and can be overcome by stronger stimulation. Phosphorylates mTORC2 complex component RICTOR at 'Thr-1695' which facilitates FBXW7-mediated ubiquitination and subsequent degradation of RICTOR. This is Glycogen synthase kinase-3 alpha (GSK3A) from Homo sapiens (Human).